The following is a 431-amino-acid chain: Gamma conglutin 1 (431 aa).

Residues 1-24 (MASFLHNFLLFFCSLSLIILTSSA) form the signal peptide. The Peptidase A1 domain occupies 51 to 407 (HVVQIHKRTP…DLMNSRLGFS (357 aa)). Cystine bridges form between Cys-79/Cys-168, Cys-93/Cys-106, Cys-98/Cys-123, Cys-109/Cys-118, and Cys-322/Cys-369.

The protein belongs to the peptidase A1 family. In terms of assembly, two-subunit monomeric unit made of alpha and beta subunits coupled by disulfide bonds (at pH 4.5 and under non-reducing conditions). Monomeric alpha and beta subunits in reducing conditions. Can also form oligomers including dimer, tetramer and cyclic hexamer (trimer of dimers) (at pH &gt; 5.5). Component of globulins complexes which accumulate in seeds. Interacts with flavonoids (e.g. apigenin glucosides) present in globulins complexes.

Its subcellular location is the secreted. The protein resides in the extracellular space. In terms of biological role, sulfur-rich seed storage protein that remains undegraded at germination. In Prunus dulcis (Almond), this protein is Gamma conglutin 1.